A 302-amino-acid polypeptide reads, in one-letter code: ICOS ligand (302 aa).

Positions 1–18 (MRLGSPGLLFLLFSSLRA) are cleaved as a signal peptide. One can recognise an Ig-like V-type domain in the interval 19–129 (DTQEKEVRAM…LGFQEVLSVE (111 aa)). Residues 19 to 256 (DTQEKEVRAM…VSTGEKNAAT (238 aa)) lie on the Extracellular side of the membrane. Cysteines 37 and 113 form a disulfide. N-linked (GlcNAc...) asparagine glycans are attached at residues asparagine 70, asparagine 137, asparagine 173, asparagine 186, and asparagine 225. The 87-residue stretch at 141-227 (PVVSAPHSPS…ENVLLQQNLT (87 aa)) folds into the Ig-like C2-type domain. Cysteine 158 and cysteine 216 are disulfide-bonded. Residues 257–277 (WSILAVLCLLVVVAVAIGWVC) form a helical membrane-spanning segment. Over 278-302 (RDRCLQHSYAGAWAVSPETELTGHV) the chain is Cytoplasmic.

Belongs to the immunoglobulin superfamily. BTN/MOG family. As to quaternary structure, interacts with CTLA4 (in vitro). Expressed on peripheral blood B-cells and monocytes, as well as on monocyte-derived dendritic cells (at protein level). As to expression, widely expressed (brain, heart, kidney, liver, lung, pancreas, placenta, skeletal muscle, bone marrow, colon, ovary, prostate, testis, lymph nodes, leukocytes, spleen, thymus and tonsil). In terms of tissue distribution, detected only in lymph nodes, leukocytes and spleen. Expressed on activated monocytes and dendritic cells.

It is found in the cell membrane. Its function is as follows. Ligand for the T-cell-specific cell surface receptor ICOS. Acts as a costimulatory signal for T-cell proliferation and cytokine secretion. Also induces B-cell proliferation and differentiation into plasma cells. Could play an important role in mediating local tissue responses to inflammatory conditions, as well as in modulating the secondary immune response by co-stimulating memory T-cell function. In endothelial cells, required for proper neutrophil transmigration in response to chemoattractants, such as CXCL8/IL8 or N-formyl-methionyl peptides (fMLP). This Homo sapiens (Human) protein is ICOS ligand (ICOSLG).